The chain runs to 506 residues: Cysteine--tRNA ligase (506 aa).

Cys-34 is a binding site for Zn(2+). Residues 36–46 (PTVYDFAHIGN) carry the 'HIGH' region motif. The Zn(2+) site is built by Cys-230, His-269, and Glu-273. The 'KMSKS' region motif lies at 302-306 (KMSKS). Lys-305 contacts ATP.

The protein belongs to the class-I aminoacyl-tRNA synthetase family. Monomer. Zn(2+) serves as cofactor.

The protein localises to the cytoplasm. It carries out the reaction tRNA(Cys) + L-cysteine + ATP = L-cysteinyl-tRNA(Cys) + AMP + diphosphate. The protein is Cysteine--tRNA ligase of Brucella suis biovar 1 (strain 1330).